A 427-amino-acid polypeptide reads, in one-letter code: 3-phosphoshikimate 1-carboxyvinyltransferase (427 aa).

3 residues coordinate 3-phosphoshikimate: Lys-22, Ser-23, and Arg-27. Lys-22 is a binding site for phosphoenolpyruvate. Positions 96 and 124 each coordinate phosphoenolpyruvate. Positions 169, 170, 171, 197, 313, 336, and 340 each coordinate 3-phosphoshikimate. Gln-171 contributes to the phosphoenolpyruvate binding site. Asp-313 functions as the Proton acceptor in the catalytic mechanism. Phosphoenolpyruvate-binding residues include Arg-344, Arg-386, and Lys-411.

The protein belongs to the EPSP synthase family. Monomer.

Its subcellular location is the cytoplasm. The enzyme catalyses 3-phosphoshikimate + phosphoenolpyruvate = 5-O-(1-carboxyvinyl)-3-phosphoshikimate + phosphate. It functions in the pathway metabolic intermediate biosynthesis; chorismate biosynthesis; chorismate from D-erythrose 4-phosphate and phosphoenolpyruvate: step 6/7. In terms of biological role, catalyzes the transfer of the enolpyruvyl moiety of phosphoenolpyruvate (PEP) to the 5-hydroxyl of shikimate-3-phosphate (S3P) to produce enolpyruvyl shikimate-3-phosphate and inorganic phosphate. This is 3-phosphoshikimate 1-carboxyvinyltransferase from Enterobacter sp. (strain 638).